A 980-amino-acid chain; its full sequence is Peroxisomal ATPase PEX6 (980 aa).

Position 119 is an omega-N-methylarginine (Arg119). ATP contacts are provided by residues 470–477 (GPPGSGKT) and 744–751 (GPPGTGKT).

The protein belongs to the AAA ATPase family. As to quaternary structure, interacts with PEX1; forming the PEX1-PEX6 AAA ATPase complex, which is composed of a heterohexamer formed by a trimer of PEX1-PEX6 dimers. Interacts with PEX26; interaction is direct and promotes recruitment to peroxisomal membranes. Interacts with ZFAND6.

Its subcellular location is the cytoplasm. The protein localises to the cytosol. The protein resides in the peroxisome membrane. It localises to the cell projection. It is found in the cilium. Its subcellular location is the photoreceptor outer segment. The catalysed reaction is ATP + H2O = ADP + phosphate + H(+). Functionally, component of the PEX1-PEX6 AAA ATPase complex, a protein dislocase complex that mediates the ATP-dependent extraction of the PEX5 receptor from peroxisomal membranes, an essential step for PEX5 recycling. Specifically recognizes PEX5 monoubiquitinated at 'Cys-11', and pulls it out of the peroxisome lumen through the PEX2-PEX10-PEX12 retrotranslocation channel. Extraction by the PEX1-PEX6 AAA ATPase complex is accompanied by unfolding of the TPR repeats and release of bound cargo from PEX5. The sequence is that of Peroxisomal ATPase PEX6 from Cricetulus griseus (Chinese hamster).